A 401-amino-acid chain; its full sequence is Probable tRNA sulfurtransferase (401 aa).

The THUMP domain occupies 60-165; the sequence is EPISEQLKGV…EQATYITFKD (106 aa). ATP contacts are provided by residues 183–184, 208–209, Arg-265, Gly-287, and Gln-296; these read ML and HF.

The protein belongs to the ThiI family.

The protein localises to the cytoplasm. The enzyme catalyses [ThiI sulfur-carrier protein]-S-sulfanyl-L-cysteine + a uridine in tRNA + 2 reduced [2Fe-2S]-[ferredoxin] + ATP + H(+) = [ThiI sulfur-carrier protein]-L-cysteine + a 4-thiouridine in tRNA + 2 oxidized [2Fe-2S]-[ferredoxin] + AMP + diphosphate. It carries out the reaction [ThiS sulfur-carrier protein]-C-terminal Gly-Gly-AMP + S-sulfanyl-L-cysteinyl-[cysteine desulfurase] + AH2 = [ThiS sulfur-carrier protein]-C-terminal-Gly-aminoethanethioate + L-cysteinyl-[cysteine desulfurase] + A + AMP + 2 H(+). It participates in cofactor biosynthesis; thiamine diphosphate biosynthesis. In terms of biological role, catalyzes the ATP-dependent transfer of a sulfur to tRNA to produce 4-thiouridine in position 8 of tRNAs, which functions as a near-UV photosensor. Also catalyzes the transfer of sulfur to the sulfur carrier protein ThiS, forming ThiS-thiocarboxylate. This is a step in the synthesis of thiazole, in the thiamine biosynthesis pathway. The sulfur is donated as persulfide by IscS. The chain is Probable tRNA sulfurtransferase from Bacillus pumilus (strain SAFR-032).